The primary structure comprises 188 residues: NADH-quinone oxidoreductase subunit B 1 (188 aa).

Residues C39, C40, C105, and C134 each contribute to the [4Fe-4S] cluster site.

It belongs to the complex I 20 kDa subunit family. In terms of assembly, NDH-1 is composed of 14 different subunits. Subunits NuoB, C, D, E, F, and G constitute the peripheral sector of the complex. [4Fe-4S] cluster serves as cofactor.

The protein resides in the cell inner membrane. The enzyme catalyses a quinone + NADH + 5 H(+)(in) = a quinol + NAD(+) + 4 H(+)(out). In terms of biological role, NDH-1 shuttles electrons from NADH, via FMN and iron-sulfur (Fe-S) centers, to quinones in the respiratory chain. The immediate electron acceptor for the enzyme in this species is believed to be ubiquinone. Couples the redox reaction to proton translocation (for every two electrons transferred, four hydrogen ions are translocated across the cytoplasmic membrane), and thus conserves the redox energy in a proton gradient. In Solibacter usitatus (strain Ellin6076), this protein is NADH-quinone oxidoreductase subunit B 1.